A 415-amino-acid polypeptide reads, in one-letter code: MGEEKSLLQFRSFPSLKTSDFALTEEPSWRLENNVSSNRRRGNKRSGGVFTNFASLSVAIRRDRRESTFNGRNGGGGGAFASVSVVIPKEEDEFAPTSAQLLKNPIALLSIVPKDAALFFAGAFAGAAAKSVTAPLDRIKLLMQTHGVRAGQQSAKKAIGFIEAITLIGKEEGIKGYWKGNLPQVIRIVPYSAVQLFAYETYKKLFRGKDGQLSVLGRLGAGACAGMTSTLITYPLDVLRLRLAVEPGYRTMSQVALNMLREEGVASFYNGLGPSLLSIAPYIAINFCVFDLVKKSLPEKYQQKTQSSLLTAVVAAAIATGTCYPLDTIRRQMQLKGTPYKSVLDAFSGIIAREGVVGLYRGFVPNALKSMPNSSIKLTTFDIVKKLIAASEKEIQRIADDNRKKASPNTIDEQT.

The N-terminal 61 residues, 1–61 (MGEEKSLLQF…NFASLSVAIR (61 aa)), are a transit peptide targeting the chloroplast. Helical transmembrane passes span 106-126 (IALLSIVPKDAALFFAGAFAG), 182-207 (LPQVIRIVPYSAVQLFAYETYKKLFR), 219-239 (LGAGACAGMTSTLITYPLDVL), 273-293 (GPSLLSIAPYIAINFCVFDLV), and 309-329 (LLTAVVAAAIATGTCYPLDTI). 3 Solcar repeats span residues 113 to 205 (PKDA…YKKL), 213 to 296 (LSVL…VKKS), and 307 to 387 (SSLL…VKKL). Position 187 (Arg-187) interacts with ADP. Arg-330 lines the ADP pocket. A helical transmembrane segment spans residues 362 to 388 (GFVPNALKSMPNSSIKLTTFDIVKKLI).

This sequence belongs to the mitochondrial carrier (TC 2.A.29) family. As to expression, highly expressed in developing photosynthetic organs such as leaves, flower buds and green siliques. Also detected in roots, flowers, mature leaves and stems.

The protein localises to the plastid. It is found in the chloroplast thylakoid membrane. It localises to the chloroplast envelope. Its activity is regulated as follows. KM and Vmax values toward ATP only are increased by m-chlorocarbonyl cyanide phenylhydrazone (CCCP). The corresponding values for ADP are not affected. In terms of biological role, specifically transports adenine nucleotides. Involved in the uptake of ATP into thylakoids in exchange for lumenal ADP. The protein is Thylakoid ADP,ATP carrier protein, chloroplastic (TAAC) of Arabidopsis thaliana (Mouse-ear cress).